The following is a 282-amino-acid chain: Bifunctional protein FolD (282 aa).

NADP(+)-binding positions include 160 to 162, Ser185, and Ile228; that span reads NRS.

The protein belongs to the tetrahydrofolate dehydrogenase/cyclohydrolase family. In terms of assembly, homodimer.

The catalysed reaction is (6R)-5,10-methylene-5,6,7,8-tetrahydrofolate + NADP(+) = (6R)-5,10-methenyltetrahydrofolate + NADPH. It catalyses the reaction (6R)-5,10-methenyltetrahydrofolate + H2O = (6R)-10-formyltetrahydrofolate + H(+). The protein operates within one-carbon metabolism; tetrahydrofolate interconversion. Its function is as follows. Catalyzes the oxidation of 5,10-methylenetetrahydrofolate to 5,10-methenyltetrahydrofolate and then the hydrolysis of 5,10-methenyltetrahydrofolate to 10-formyltetrahydrofolate. In Cenarchaeum symbiosum (strain A), this protein is Bifunctional protein FolD.